A 303-amino-acid polypeptide reads, in one-letter code: Lysosomal amino acid transporter 1 homolog (303 aa).

Over 1–38 (MAEGLRAPPPPGNGSECPDGARWVLRLLGECARDGRDV) the chain is Lumenal. Asn13 carries an N-linked (GlcNAc...) asparagine glycan. Positions 36–102 (RDVGSALLGL…LANQLPLQVY (67 aa)) constitute a PQ-loop 1 domain. The chain crosses the membrane as a helical span at residues 39 to 59 (GSALLGLLSIGCFAAAALPQF). At 60–73 (YQACKTGIMDRALS) the chain is on the cytoplasmic side. A helical transmembrane segment spans residues 74 to 94 (IYFLLGWLGGDLLNLIGSFLA). The Lumenal segment spans residues 95–96 (NQ). A helical transmembrane segment spans residues 97-117 (LPLQVYTAVYYVLADLVMLSL). Over 118 to 131 (YGYYKAKNWGTGAT) the chain is Cytoplasmic. Residues 132 to 152 (ASINAACLFCLLGTATTLTVL) traverse the membrane as a helical segment. At 153 to 182 (SHDTGPAPNPAAFGGRSLLSLGLEGPGPEP) the chain is on the lumenal side. A helical transmembrane segment spans residues 183 to 203 (ISKTEIIGFAIGSISSVLYLC). The PQ-loop 2 domain occupies 186 to 251 (TEIIGFAIGS…LKNPEPGQSE (66 aa)). Topologically, residues 204-220 (SRLPQIYTNYRRKSTAG) are cytoplasmic. The helical transmembrane segment at 221–241 (VSFLLFALVMLGNLLYGTSVL) threads the bilayer. At 242–260 (LKNPEPGQSEGDYILHHLP) the chain is on the lumenal side. A helical membrane pass occupies residues 261-281 (WLIGSLGVLSLDVIISFQFLA). Residues 282–303 (YRTGQPSAGEEREALLAEHGDS) are Cytoplasmic-facing. The Di-leucine motif signature appears at 296 to 297 (LL).

This sequence belongs to the laat-1 family.

The protein resides in the lysosome membrane. Functionally, amino acid transporter that specifically mediates the pH-dependent export of the cationic amino acids arginine, histidine and lysine from lysosomes. This is Lysosomal amino acid transporter 1 homolog (SLC66A1) from Gallus gallus (Chicken).